Consider the following 431-residue polypeptide: Tol-Pal system protein TolB (431 aa).

The N-terminal stretch at 1–18 is a signal peptide; sequence MKALLLSLLLLLPVVALA. Residues 410–431 are disordered; the sequence is LPLRTEKGTYQTPDWSPLPQAQ.

This sequence belongs to the TolB family. The Tol-Pal system is composed of five core proteins: the inner membrane proteins TolA, TolQ and TolR, the periplasmic protein TolB and the outer membrane protein Pal. They form a network linking the inner and outer membranes and the peptidoglycan layer.

It is found in the periplasm. Its function is as follows. Part of the Tol-Pal system, which plays a role in outer membrane invagination during cell division and is important for maintaining outer membrane integrity. The polypeptide is Tol-Pal system protein TolB (Myxococcus xanthus).